Reading from the N-terminus, the 213-residue chain is Small ribosomal subunit protein uS4 (213 aa).

The tract at residues 16–53 (GTDLGLKSGVKPYDVKTKKSARPPGQHGVSRNKSSEYS) is disordered. Positions 44-53 (VSRNKSSEYS) are enriched in polar residues. The region spanning 97–163 (SRLDNVVYRM…EKSREQLRIK (67 aa)) is the S4 RNA-binding domain.

The protein belongs to the universal ribosomal protein uS4 family. In terms of assembly, part of the 30S ribosomal subunit. Contacts protein S5. The interaction surface between S4 and S5 is involved in control of translational fidelity.

In terms of biological role, one of the primary rRNA binding proteins, it binds directly to 16S rRNA where it nucleates assembly of the body of the 30S subunit. Its function is as follows. With S5 and S12 plays an important role in translational accuracy. The chain is Small ribosomal subunit protein uS4 from Psychrobacter arcticus (strain DSM 17307 / VKM B-2377 / 273-4).